We begin with the raw amino-acid sequence, 205 residues long: Thymidylate kinase (205 aa).

10 to 17 (GTEGVGKS) serves as a coordination point for ATP.

It belongs to the thymidylate kinase family.

It carries out the reaction dTMP + ATP = dTDP + ADP. In terms of biological role, phosphorylation of dTMP to form dTDP in both de novo and salvage pathways of dTTP synthesis. The sequence is that of Thymidylate kinase from Teredinibacter turnerae (strain ATCC 39867 / T7901).